The sequence spans 3933 residues: Circularly permutated Ras protein 2 (3933 aa).

Residues valine 12–lysine 46 are a coiled coil. 4 disordered regions span residues isoleucine 23 to lysine 101, aspartate 136 to threonine 189, isoleucine 1022 to threonine 1054, and asparagine 2817 to arginine 2839. Residues glutamate 28–glutamate 62 show a composition bias toward basic and acidic residues. Over residues threonine 70–asparagine 92 the composition is skewed to low complexity. A compositionally biased stretch (basic and acidic residues) spans aspartate 136–phenylalanine 145. The span at glutamate 146–glutamine 156 shows a compositional bias: polar residues. Residues lysine 167 to glutamine 215 adopt a coiled-coil conformation. Over residues threonine 168–threonine 189 the composition is skewed to basic and acidic residues. Over residues asparagine 2817 to asparagine 2826 the composition is skewed to low complexity. GTP is bound by residues aspartate 2853–glutamine 2857, threonine 2913–aspartate 2916, and glycine 2976–serine 2983. 3 disordered regions span residues leucine 3036 to arginine 3086, arginine 3107 to glutamate 3142, and valine 3733 to serine 3754. Residues proline 3070–arginine 3086 show a composition bias toward low complexity. The segment covering arginine 3107–tyrosine 3120 has biased composition (basic and acidic residues). Residues aspartate 3121–tyrosine 3141 are compositionally biased toward acidic residues.

Belongs to the small GTPase superfamily. CpRas family.

The polypeptide is Circularly permutated Ras protein 2 (cpras2) (Dictyostelium discoideum (Social amoeba)).